Consider the following 186-residue polypeptide: Transposon Tn501 resolvase (186 aa).

One can recognise a Resolvase/invertase-type recombinase catalytic domain in the interval 4–137 (HRIGYVRVSS…EGITLAKQRG (134 aa)). Serine 12 (O-(5'-phospho-DNA)-serine intermediate) is an active-site residue. Residues 17 to 38 (NPERQLEQTQVSKVFTDKASGK) form a disordered region. Residues 164–183 (KAQLAREFNISRETLYQYLR) constitute a DNA-binding region (H-T-H motif).

The protein belongs to the site-specific recombinase resolvase family.

In terms of biological role, resolvase catalyzes the resolution (a site-specific recombination) of the cointegrated replicon to yield the final transposition products. This is Transposon Tn501 resolvase (tnpR) from Pseudomonas aeruginosa.